Reading from the N-terminus, the 398-residue chain is 4-hydroxy-3-methylbut-2-enyl diphosphate reductase (398 aa).

C66 lines the [4Fe-4S] cluster pocket. Residue H96 coordinates (2E)-4-hydroxy-3-methylbut-2-enyl diphosphate. Residue H96 coordinates dimethylallyl diphosphate. H96 contacts isopentenyl diphosphate. C157 provides a ligand contact to [4Fe-4S] cluster. Residue H185 participates in (2E)-4-hydroxy-3-methylbut-2-enyl diphosphate binding. H185 is a dimethylallyl diphosphate binding site. H185 lines the isopentenyl diphosphate pocket. Residue E187 is the Proton donor of the active site. T250 is a (2E)-4-hydroxy-3-methylbut-2-enyl diphosphate binding site. C288 contributes to the [4Fe-4S] cluster binding site. (2E)-4-hydroxy-3-methylbut-2-enyl diphosphate-binding residues include S317, S318, N319, and S379. Dimethylallyl diphosphate-binding residues include S317, S318, N319, and S379. 4 residues coordinate isopentenyl diphosphate: S317, S318, N319, and S379.

It belongs to the IspH family. [4Fe-4S] cluster is required as a cofactor.

It carries out the reaction isopentenyl diphosphate + 2 oxidized [2Fe-2S]-[ferredoxin] + H2O = (2E)-4-hydroxy-3-methylbut-2-enyl diphosphate + 2 reduced [2Fe-2S]-[ferredoxin] + 2 H(+). It catalyses the reaction dimethylallyl diphosphate + 2 oxidized [2Fe-2S]-[ferredoxin] + H2O = (2E)-4-hydroxy-3-methylbut-2-enyl diphosphate + 2 reduced [2Fe-2S]-[ferredoxin] + 2 H(+). Its pathway is isoprenoid biosynthesis; dimethylallyl diphosphate biosynthesis; dimethylallyl diphosphate from (2E)-4-hydroxy-3-methylbutenyl diphosphate: step 1/1. The protein operates within isoprenoid biosynthesis; isopentenyl diphosphate biosynthesis via DXP pathway; isopentenyl diphosphate from 1-deoxy-D-xylulose 5-phosphate: step 6/6. In terms of biological role, catalyzes the conversion of 1-hydroxy-2-methyl-2-(E)-butenyl 4-diphosphate (HMBPP) into a mixture of isopentenyl diphosphate (IPP) and dimethylallyl diphosphate (DMAPP). Acts in the terminal step of the DOXP/MEP pathway for isoprenoid precursor biosynthesis. This chain is 4-hydroxy-3-methylbut-2-enyl diphosphate reductase, found in Synechococcus sp. (strain ATCC 27144 / PCC 6301 / SAUG 1402/1) (Anacystis nidulans).